The following is a 228-amino-acid chain: Endo-1,4-beta-xylanase B (228 aa).

The first 19 residues, 1-19 (MVSFTYLLAAVSAVTGAVA), serve as a signal peptide directing secretion. Residues 37–227 (KRTSPTTGVN…SSGQATMTVS (191 aa)) form the GH11 domain. The active-site Nucleophile is Glu122. Catalysis depends on Glu214, which acts as the Proton donor.

Belongs to the glycosyl hydrolase 11 (cellulase G) family.

It is found in the secreted. The enzyme catalyses Endohydrolysis of (1-&gt;4)-beta-D-xylosidic linkages in xylans.. It functions in the pathway glycan degradation; xylan degradation. Its activity is regulated as follows. Inhibited by the proteinaceous endoxylanase inhibitor I from T.aestivum (TAXI-I). In terms of biological role, endo-1,4-beta-xylanase involved in the hydrolysis of xylan, a major structural heterogeneous polysaccharide found in plant biomass representing the second most abundant polysaccharide in the biosphere, after cellulose. Plays an important role in causing fusarium head blight (FHB) on cereal crops. Induces cell death and hydrogen peroxide accumulation in infected wheat leaves. This is Endo-1,4-beta-xylanase B (XYLB) from Gibberella zeae (strain ATCC MYA-4620 / CBS 123657 / FGSC 9075 / NRRL 31084 / PH-1) (Wheat head blight fungus).